Consider the following 41-residue polypeptide: uncharacterized protein (41 aa).

Residues Met1–Ala12 show a composition bias toward basic and acidic residues. A disordered region spans residues Met1–Asp23.

This is an uncharacterized protein from Homo sapiens (Human).